Consider the following 436-residue polypeptide: 3-ketoacyl-CoA thiolase (436 aa).

Cys99 acts as the Acyl-thioester intermediate in catalysis. Catalysis depends on proton acceptor residues His392 and Cys422.

It belongs to the thiolase-like superfamily. Thiolase family. As to quaternary structure, heterotetramer of two alpha chains (FadJ) and two beta chains (FadI).

The protein localises to the cytoplasm. The catalysed reaction is an acyl-CoA + acetyl-CoA = a 3-oxoacyl-CoA + CoA. Its pathway is lipid metabolism; fatty acid beta-oxidation. Functionally, catalyzes the final step of fatty acid oxidation in which acetyl-CoA is released and the CoA ester of a fatty acid two carbons shorter is formed. The chain is 3-ketoacyl-CoA thiolase from Shewanella amazonensis (strain ATCC BAA-1098 / SB2B).